Reading from the N-terminus, the 195-residue chain is Small ribosomal subunit protein uS5 (195 aa).

The interval Met1–Asp20 is disordered. In terms of domain architecture, S5 DRBM spans Phe23–Val86. The interval Asp161 to Ala195 is disordered.

This sequence belongs to the universal ribosomal protein uS5 family. In terms of assembly, part of the 30S ribosomal subunit. Contacts proteins S4 and S8.

With S4 and S12 plays an important role in translational accuracy. In terms of biological role, located at the back of the 30S subunit body where it stabilizes the conformation of the head with respect to the body. The chain is Small ribosomal subunit protein uS5 from Methylobacterium radiotolerans (strain ATCC 27329 / DSM 1819 / JCM 2831 / NBRC 15690 / NCIMB 10815 / 0-1).